The following is a 412-amino-acid chain: Protein MT3510 (412 aa).

An N6-(pyridoxal phosphate)lysine modification is found at Lys227.

The protein belongs to the DegT/DnrJ/EryC1 family.

This is Protein MT3510 from Mycobacterium tuberculosis (strain CDC 1551 / Oshkosh).